The primary structure comprises 161 residues: Eukaryotic translation initiation factor 5A-1 (161 aa).

A Hypusine modification is found at K54.

It belongs to the eIF-5A family. In terms of processing, lys-54 undergoes hypusination, a unique post-translational modification that consists in the addition of a butylamino group from spermidine to lysine side chain, leading to the formation of the unusual amino acid hypusine. eIF-5As are the only known proteins to undergo this modification, which is essential for their function. Expressed specifically in the germline in the distal region of gonads where germ cells actively proliferate.

Its subcellular location is the cytoplasm. In terms of biological role, translation factor that promotes translation elongation and termination, particularly upon ribosome stalling at specific amino acid sequence contexts. Binds between the exit (E) and peptidyl (P) site of the ribosome and promotes rescue of stalled ribosome: specifically required for efficient translation of polyproline-containing peptides as well as other motifs that stall the ribosome. Acts as a ribosome quality control (RQC) cofactor by joining the RQC complex to facilitate peptidyl transfer during CAT tailing step. Required for mitotic germ cell proliferation, gametogenesis after entry into meiosis, and localization of the P granule component pgl-1 on P granules. This chain is Eukaryotic translation initiation factor 5A-1 (iff-1), found in Caenorhabditis elegans.